Reading from the N-terminus, the 495-residue chain is Cytochrome P450 2E1 (495 aa).

298–303 (FAGTET) is a binding site for substrate. Cys437 provides a ligand contact to heme.

This sequence belongs to the cytochrome P450 family. Interacts with chaperones HSP70 and HSP90; this interaction is required for initial targeting to mitochondria. Heme serves as cofactor.

The protein resides in the endoplasmic reticulum membrane. Its subcellular location is the microsome membrane. The protein localises to the mitochondrion inner membrane. It catalyses the reaction an organic molecule + reduced [NADPH--hemoprotein reductase] + O2 = an alcohol + oxidized [NADPH--hemoprotein reductase] + H2O + H(+). The catalysed reaction is (5Z,8Z,11Z)-eicosatrienoate + reduced [NADPH--hemoprotein reductase] + O2 = 19-hydroxy-(5Z,8Z,11Z)-eicosatrienoate + oxidized [NADPH--hemoprotein reductase] + H2O + H(+). The enzyme catalyses (5Z,8Z,11Z,14Z,17Z)-eicosapentaenoate + reduced [NADPH--hemoprotein reductase] + O2 = 19-hydroxy-(5Z,8Z,11Z,14Z,17Z)-eicosapentaenoate + oxidized [NADPH--hemoprotein reductase] + H2O + H(+). It carries out the reaction (4Z,7Z,10Z,13Z,16Z,19Z)-docosahexaenoate + reduced [NADPH--hemoprotein reductase] + O2 = 21-hydroxy-(4Z,7Z,10Z,13Z,16Z,19Z)-docosahexaenoate + oxidized [NADPH--hemoprotein reductase] + H2O + H(+). It catalyses the reaction dodecanoate + reduced [NADPH--hemoprotein reductase] + O2 = 11-hydroxydodecanoate + oxidized [NADPH--hemoprotein reductase] + H2O + H(+). The catalysed reaction is tetradecanoate + reduced [NADPH--hemoprotein reductase] + O2 = 13-hydroxytetradecanoate + oxidized [NADPH--hemoprotein reductase] + H2O + H(+). The enzyme catalyses 4-nitrophenol + NADPH + O2 + H(+) = 4-nitrocatechol + NADP(+) + H2O. The protein operates within lipid metabolism; fatty acid metabolism. With respect to regulation, the omega-1 hydroxylase activity is stimulated by cytochrome b5. Functionally, a cytochrome P450 monooxygenase involved in the metabolism of fatty acids. Mechanistically, uses molecular oxygen inserting one oxygen atom into a substrate, and reducing the second into a water molecule, with two electrons provided by NADPH via cytochrome P450 reductase (NADPH--hemoprotein reductase). Catalyzes the hydroxylation of carbon-hydrogen bonds. Hydroxylates fatty acids specifically at the omega-1 position displaying the highest catalytic activity for saturated fatty acids. May be involved in the oxidative metabolism of xenobiotics. The polypeptide is Cytochrome P450 2E1 (CYP2E1) (Sus scrofa (Pig)).